The following is a 468-amino-acid chain: Glutamate--tRNA ligase (468 aa).

A 'HIGH' region motif is present at residues 14-24 (PSPTGFIHLGN). Residues 246 to 250 (KMSKR) carry the 'KMSKS' region motif. K249 provides a ligand contact to ATP.

This sequence belongs to the class-I aminoacyl-tRNA synthetase family. Glutamate--tRNA ligase type 1 subfamily. Monomer.

The protein resides in the cytoplasm. It carries out the reaction tRNA(Glu) + L-glutamate + ATP = L-glutamyl-tRNA(Glu) + AMP + diphosphate. Its function is as follows. Catalyzes the attachment of glutamate to tRNA(Glu) in a two-step reaction: glutamate is first activated by ATP to form Glu-AMP and then transferred to the acceptor end of tRNA(Glu). This is Glutamate--tRNA ligase from Leptothrix cholodnii (strain ATCC 51168 / LMG 8142 / SP-6) (Leptothrix discophora (strain SP-6)).